The following is a 231-amino-acid chain: NADH-ubiquinone oxidoreductase chain 4 (231 aa).

The next 6 membrane-spanning stretches (helical) occupy residues 1–21, 34–54, 61–80, 85–107, 128–148, and 169–189; these read PIAG…YGII, MFLP…LTCL, SLIA…AIII, GLAG…FCLA, ILPM…AIPP, and TIIL…HMFL.

The protein belongs to the complex I subunit 4 family.

The protein resides in the mitochondrion membrane. The catalysed reaction is a ubiquinone + NADH + 5 H(+)(in) = a ubiquinol + NAD(+) + 4 H(+)(out). Its function is as follows. Core subunit of the mitochondrial membrane respiratory chain NADH dehydrogenase (Complex I) that is believed to belong to the minimal assembly required for catalysis. Complex I functions in the transfer of electrons from NADH to the respiratory chain. The immediate electron acceptor for the enzyme is believed to be ubiquinone. This chain is NADH-ubiquinone oxidoreductase chain 4 (MT-ND4), found in Gloydius blomhoffii (Mamushi).